Reading from the N-terminus, the 707-residue chain is DCC-interacting protein 13-alpha (707 aa).

The required for RAB5A binding stretch occupies residues 1 to 428 (MPGIDKLPIE…PPTARTSSSG (428 aa)). One can recognise a BAR domain in the interval 3–268 (GIDKLPIEET…DPLYLPDPDP (266 aa)). Positions 234 to 257 (QNVRREMDGDVETMQQTIEDLEVA) form a coiled coil. One can recognise a PH domain in the interval 277-375 (LTRKAGYLNA…WICTINNISK (99 aa)). Disordered stretches follow at residues 397–433 (AVTPSPSFQQRHESLRPGGQSRPPTARTSSSGSLGSE), 466–490 (GQAKAFGQGGRRTNPFGESGGSTKS), and 636–707 (EKQK…ESEA). Threonine 399 carries the post-translational modification Phosphothreonine. Position 401 is a phosphoserine (serine 401). The F&amp;H signature appears at 403–414 (SFQQRHESLRPG). At serine 410 the chain carries Phosphoserine; by PKA. One can recognise a PID domain in the interval 495–655 (SILHQLFIVR…EKQQKELSKQ (161 aa)). Positions 620–670 (LAKQIALHAELDRRASEKQKEIERVKEKQQKELSKQKQIEKDLEEQSRLIA) form a coiled coil. Residues 636 to 666 (EKQKEIERVKEKQQKELSKQKQIEKDLEEQS) are compositionally biased toward basic and acidic residues. Over residues 679 to 691 (GSEGQLVLSSSQS) the composition is skewed to low complexity. Residues serine 691 and serine 694 each carry the phosphoserine modification. The segment covering 698 to 707 (EEGKKRESEA) has biased composition (basic and acidic residues).

As to quaternary structure, homodimer. Binds RAB5A/Rab5 through an N-terminal domain. This interaction is essential for its recruitment to endosomal membranes as well as its role in cell proliferation. Binds DCC and the catalytic domain of the inactive form of AKT2 through its PID domain. Binds PIK3CA and subunits of the NuRD/MeCP1 complex. Interacts with OCRL and INPP5B. Interacts with NTRK2. Interacts with APPL2; interaction is independent of follicle stimulating hormone stimulation; interaction is decreased by adiponectin in a time-dependent manner. Forms a complex with APPL2 and RUVBL2. Forms a complex comprising APPL2, RUVBL2, CTNNB1, HDAC1 and HDAC2; interaction reduces interaction between CTNNB1, HDAC1, HDAC2 and RUVBL2 leading to the decrease of deacetylase activity of this complex; affects the recruitment of repressive complexes to the Wnt target genes. Interacts with ANXA2. Interacts with TGFBR1; interaction is TGF beta dependent; mediates trafficking of the TGFBR1 from the endosomes to the nucleus via microtubules in a TRAF6-dependent manner. Interacts with PRKCZ. Interacts with PIK3R1 and APPL2. Interacts with ADIPOR1; ADIPOQ enhances this interaction; inhibites adiponectin-stimulated binding of APPL2 to ADIPOR1. In terms of processing, phosphorylation at Ser-410 by PKA severely impairs binding to OCRL. As to expression, expressed in insulin-target tissues including skeletal muscle, liver, fat, and brain.

The protein resides in the early endosome membrane. It is found in the nucleus. The protein localises to the cytoplasm. It localises to the endosome. Its subcellular location is the cell projection. The protein resides in the ruffle. It is found in the cytoplasmic vesicle. The protein localises to the phagosome. In terms of biological role, multifunctional adapter protein that binds to various membrane receptors, nuclear factors and signaling proteins to regulate many processes, such as cell proliferation, immune response, endosomal trafficking and cell metabolism. Regulates signaling pathway leading to cell proliferation through interaction with RAB5A and subunits of the NuRD/MeCP1 complex. Functions as a positive regulator of innate immune response via activation of AKT1 signaling pathway by forming a complex with APPL1 and PIK3R1. Inhibits Fc-gamma receptor-mediated phagocytosis through PI3K/Akt signaling in macrophages. Regulates TLR4 signaling in activated macrophages. Involved in trafficking of the TGFBR1 from the endosomes to the nucleus via microtubules in a TRAF6-dependent manner. Plays a role in cell metabolism by regulating adiponecting and insulin signaling pathways. Required for fibroblast migration through HGF cell signaling. Positive regulator of beta-catenin/TCF-dependent transcription through direct interaction with RUVBL2/reptin resulting in the relief of RUVBL2-mediated repression of beta-catenin/TCF target genes by modulating the interactions within the beta-catenin-reptin-HDAC complex. This chain is DCC-interacting protein 13-alpha, found in Mus musculus (Mouse).